The chain runs to 842 residues: Elongation factor 2 (842 aa).

The region spanning 17 to 253 is the tr-type G domain; it reads TNVRNMSVIA…LWGDSYFNPK (237 aa). GTP is bound by residues 26 to 33, 158 to 161, and 213 to 215; these read AHVDHGKS, NKVD, and SGL. At His699 the chain carries Diphthamide.

This sequence belongs to the TRAFAC class translation factor GTPase superfamily. Classic translation factor GTPase family. EF-G/EF-2 subfamily.

The protein resides in the cytoplasm. The enzyme catalyses GTP + H2O = GDP + phosphate + H(+). In terms of biological role, catalyzes the GTP-dependent ribosomal translocation step during translation elongation. During this step, the ribosome changes from the pre-translocational (PRE) to the post-translocational (POST) state as the newly formed A-site-bound peptidyl-tRNA and P-site-bound deacylated tRNA move to the P and E sites, respectively. Catalyzes the coordinated movement of the two tRNA molecules, the mRNA and conformational changes in the ribosome. The protein is Elongation factor 2 (EFT1) of Komagataella pastoris (Yeast).